The sequence spans 111 residues: Disintegrin lebein-1-alpha (111 aa).

Residues 1 to 20 (MIQVLLVTICLAVFPYQGSS) form the signal peptide. A propeptide spanning residues 21–47 (IILESGNVNDYEIVYPKKVTVLPTGAM) is cleaved from the precursor. The region spanning 47 to 111 (MNSGNPCCDP…SDCPRNPYKD (65 aa)) is the Disintegrin domain. 4 disulfide bridges follow: cysteine 53/cysteine 76, cysteine 67/cysteine 73, cysteine 72/cysteine 97, and cysteine 85/cysteine 104. The Cell attachment site signature appears at 89–91 (RGD).

Belongs to the disintegrin family. Dimeric disintegrin subfamily. Heterodimer with subunit beta; disulfide-linked. As to expression, expressed by the venom gland.

The protein resides in the secreted. Its function is as follows. Strongly inhibits ADP-induced platelet aggregation on human platelet-rich plasma. Also avidly binds to the laminin-binding beta-1 integrins (alpha-3/beta-1, alpha-6/beta-1, and alpha-7/beta-1) in an RGD-independent manner. The polypeptide is Disintegrin lebein-1-alpha (Macrovipera lebetinus (Levantine viper)).